Reading from the N-terminus, the 210-residue chain is Protein GrpE (210 aa).

Residues 1 to 31 (MAKDPQTPTDEELARAERDAEPQPGDATDDE) form a disordered region. A compositionally biased stretch (basic and acidic residues) spans 12-21 (ELARAERDAE).

It belongs to the GrpE family. Homodimer.

It is found in the cytoplasm. Functionally, participates actively in the response to hyperosmotic and heat shock by preventing the aggregation of stress-denatured proteins, in association with DnaK and GrpE. It is the nucleotide exchange factor for DnaK and may function as a thermosensor. Unfolded proteins bind initially to DnaJ; upon interaction with the DnaJ-bound protein, DnaK hydrolyzes its bound ATP, resulting in the formation of a stable complex. GrpE releases ADP from DnaK; ATP binding to DnaK triggers the release of the substrate protein, thus completing the reaction cycle. Several rounds of ATP-dependent interactions between DnaJ, DnaK and GrpE are required for fully efficient folding. This is Protein GrpE from Chromohalobacter salexigens (strain ATCC BAA-138 / DSM 3043 / CIP 106854 / NCIMB 13768 / 1H11).